A 255-amino-acid polypeptide reads, in one-letter code: 1-(5-phosphoribosyl)-5-[(5-phosphoribosylamino)methylideneamino] imidazole-4-carboxamide isomerase (255 aa).

The active-site Proton acceptor is Asp8. The Proton donor role is filled by Asp129.

The protein belongs to the HisA/HisF family.

The protein resides in the cytoplasm. The catalysed reaction is 1-(5-phospho-beta-D-ribosyl)-5-[(5-phospho-beta-D-ribosylamino)methylideneamino]imidazole-4-carboxamide = 5-[(5-phospho-1-deoxy-D-ribulos-1-ylimino)methylamino]-1-(5-phospho-beta-D-ribosyl)imidazole-4-carboxamide. It functions in the pathway amino-acid biosynthesis; L-histidine biosynthesis; L-histidine from 5-phospho-alpha-D-ribose 1-diphosphate: step 4/9. The chain is 1-(5-phosphoribosyl)-5-[(5-phosphoribosylamino)methylideneamino] imidazole-4-carboxamide isomerase from Prochlorococcus marinus (strain MIT 9211).